The chain runs to 86 residues: Candiduxin-1 (86 aa).

Positions Met-1–Thr-21 are cleaved as a signal peptide. 4 disulfides stabilise this stretch: Cys-24/Cys-45, Cys-38/Cys-62, Cys-66/Cys-78, and Cys-79/Cys-84.

The protein belongs to the three-finger toxin family. Short-chain subfamily. Orphan group IX sub-subfamily. In terms of tissue distribution, expressed by the venom gland.

It localises to the secreted. This Bungarus candidus (Malayan krait) protein is Candiduxin-1.